The chain runs to 97 residues: MTAKGQMLQDPFLNALRKEHVPVSIYLVNGIKLQGQVESFDQYVVLLRNTSVTQMVYKHAISTIVPARSVNLQHENKPQAAPASTLVQVETVQQPAE.

The region spanning 10–70 is the Sm domain; it reads DPFLNALRKE…ISTIVPARSV (61 aa).

Belongs to the Hfq family. Homohexamer.

RNA chaperone that binds small regulatory RNA (sRNAs) and mRNAs to facilitate mRNA translational regulation in response to envelope stress, environmental stress and changes in metabolite concentrations. Also binds with high specificity to tRNAs. This chain is RNA-binding protein Hfq, found in Neisseria gonorrhoeae (strain ATCC 700825 / FA 1090).